Consider the following 323-residue polypeptide: Thiamine-monophosphate kinase (323 aa).

Mg(2+) is bound by residues aspartate 30, serine 45, threonine 46, and aspartate 47. Substrate is bound at residue histidine 54. Residues aspartate 75 and aspartate 122 each contribute to the Mg(2+) site. ATP is bound by residues glycine 121 to aspartate 122 and arginine 146. Residue aspartate 212 coordinates Mg(2+). ATP is bound at residue serine 214. Aspartate 215 is a Mg(2+) binding site. Substrate-binding residues include glutamate 263 and phenylalanine 319.

The protein belongs to the thiamine-monophosphate kinase family.

It carries out the reaction thiamine phosphate + ATP = thiamine diphosphate + ADP. The protein operates within cofactor biosynthesis; thiamine diphosphate biosynthesis; thiamine diphosphate from thiamine phosphate: step 1/1. Catalyzes the ATP-dependent phosphorylation of thiamine-monophosphate (TMP) to form thiamine-pyrophosphate (TPP), the active form of vitamin B1. This chain is Thiamine-monophosphate kinase, found in Buchnera aphidicola subsp. Acyrthosiphon pisum (strain APS) (Acyrthosiphon pisum symbiotic bacterium).